Here is a 473-residue protein sequence, read N- to C-terminus: DNA (cytosine-5)-methyltransferase DRM1A (473 aa).

The 42-residue stretch at 20–61 folds into the UBA 1 domain; that stretch reads SAPSALVAYFLGMGFSREMVFRAIKEIGDTDSEQILELLLTY. The segment covering 84-101 has biased composition (acidic residues); it reads EEEDEEEDVNWDEDDTVD. The segment at 84–115 is disordered; the sequence is EEEDEEEDVNWDEDDTVDNFDRATYSDGSGDE. The UBA 2 domain maps to 120 to 140; it reads EMSEKDEKIKSLVSMGFPEDE. One can recognise an SAM-dependent MTase DRM-type domain in the interval 204–431; sequence VHRNLPDQAL…DSVKTIMASI (228 aa).

This sequence belongs to the class I-like SAM-binding methyltransferase superfamily. DRM-methyltransferase family.

Its subcellular location is the nucleus. The enzyme catalyses a 2'-deoxycytidine in DNA + S-adenosyl-L-methionine = a 5-methyl-2'-deoxycytidine in DNA + S-adenosyl-L-homocysteine + H(+). Functionally, involved in de novo DNA methylation. Involved in RNA-directed DNA methylation (RdDM). The protein is DNA (cytosine-5)-methyltransferase DRM1A of Oryza sativa subsp. japonica (Rice).